We begin with the raw amino-acid sequence, 295 residues long: Fructose-bisphosphate aldolase class 1 (295 aa).

The active-site Proton acceptor is Glu176. Lys213 functions as the Schiff-base intermediate with dihydroxyacetone-P in the catalytic mechanism.

The protein belongs to the class I fructose-bisphosphate aldolase family.

It catalyses the reaction beta-D-fructose 1,6-bisphosphate = D-glyceraldehyde 3-phosphate + dihydroxyacetone phosphate. It functions in the pathway carbohydrate degradation; glycolysis; D-glyceraldehyde 3-phosphate and glycerone phosphate from D-glucose: step 4/4. This is Fructose-bisphosphate aldolase class 1 from Treponema denticola (strain ATCC 35405 / DSM 14222 / CIP 103919 / JCM 8153 / KCTC 15104).